Here is a 969-residue protein sequence, read N- to C-terminus: Translation initiation factor IF-2 (969 aa).

A compositionally biased stretch (basic and acidic residues) spans His-49 to Lys-63. Disordered stretches follow at residues His-49–Thr-85, Asp-100–Glu-128, and Leu-143–Ala-380. The segment covering Val-105–Ala-114 has biased composition (low complexity). Basic and acidic residues predominate over residues Leu-143 to Ala-181. Over residues Ala-182 to Ser-206 the composition is skewed to low complexity. The segment covering Asp-209–Arg-260 has biased composition (basic and acidic residues). Low complexity predominate over residues Ala-301–Ala-323. Residues Ser-353–Lys-366 show a composition bias toward gly residues. The 170-residue stretch at Pro-469–Lys-638 folds into the tr-type G domain. Residues Gly-478 to Thr-485 are G1. Gly-478 to Thr-485 serves as a coordination point for GTP. A G2 region spans residues Gly-503–His-507. The G3 stretch occupies residues Asp-524 to Gly-527. Residues Asp-524–His-528 and Asn-578–Asp-581 each bind GTP. The tract at residues Asn-578–Asp-581 is G4. The interval Ser-614 to Lys-616 is G5.

Belongs to the TRAFAC class translation factor GTPase superfamily. Classic translation factor GTPase family. IF-2 subfamily.

The protein localises to the cytoplasm. In terms of biological role, one of the essential components for the initiation of protein synthesis. Protects formylmethionyl-tRNA from spontaneous hydrolysis and promotes its binding to the 30S ribosomal subunits. Also involved in the hydrolysis of GTP during the formation of the 70S ribosomal complex. The polypeptide is Translation initiation factor IF-2 (Burkholderia multivorans (strain ATCC 17616 / 249)).